The following is a 268-amino-acid chain: MGDEKPVIVMANRERDRELLIPVADSGDKDDGSSSKPSSSSSASSSSHQSSHETLSLFIRGWASKKFMTGCVILLPIAITFYITWWFIHFVDGFFSPIYAQLGINVFGFGFLTSIAFIFLVGVFMSSWLGASVLNLGEWFIKRMPFVRHIYNASKQISTAISPDQNTQAFKEVAIIRHPRVGEYAFGFITSTVVLQNYPTEEELCCVYVPTNHLYIGDILLVNSNDVIRPNLSVREGIEIVVSGGMSMPQILSTVDKPLASIDRATSL.

Over 1 to 70 the chain is Cytoplasmic; sequence MGDEKPVIVM…GWASKKFMTG (70 aa). The segment at 21–48 is disordered; sequence IPVADSGDKDDGSSSKPSSSSSASSSSH. The segment covering 34–48 has biased composition (low complexity); it reads SSKPSSSSSASSSSH. A helical membrane pass occupies residues 71 to 91; the sequence is CVILLPIAITFYITWWFIHFV. Over 92 to 103 the chain is Extracellular; sequence DGFFSPIYAQLG. The chain crosses the membrane as a helical span at residues 104–124; it reads INVFGFGFLTSIAFIFLVGVF. Topologically, residues 125-268 are cytoplasmic; it reads MSSWLGASVL…LASIDRATSL (144 aa).

Belongs to the plant COV1 protein family. As to expression, mostly expressed in flowers and stems, and, to a lower extent, in roots and leaves.

It localises to the membrane. Functionally, involved in the regulation of vascular patterning in the stem, probably by negatively regulating the differentiation of vascular tissue. In Arabidopsis thaliana (Mouse-ear cress), this protein is Protein CONTINUOUS VASCULAR RING 1.